A 537-amino-acid chain; its full sequence is Beta-1-syntrophin (537 aa).

A2 is subject to N-acetylalanine. PH domains are found at residues 18–297 (RAQR…SNAG) and 321–432 (EIRH…QGCH). Phosphoserine is present on residues S86, S125, and S204. The PDZ domain maps to 111 to 194 (GVKVLKQELG…EVLLEVKYMR (84 aa)). The tract at residues 204–233 (SPVSEIGWETPPPESPRLGGGSAEPLSSQS) is disordered. A Phosphothreonine modification is found at T213. S218, S225, S231, S235, and S388 each carry phosphoserine. In terms of domain architecture, SU spans 481-537 (PYEKLKMSSDDGIRMLYLDFGGKEGEIQLDLHSCPKPIVFIIHSFLSAKITRLGLVA). The interval 517 to 537 (PIVFIIHSFLSAKITRLGLVA) is calmodulin-binding.

Belongs to the syntrophin family. Monomer and homodimer. Interacts with the viral HTLV-1 TAX protein and other members of the syntrophin family: SNTA1 and SNTB2. Interacts with the dystrophin protein DMD and related proteins DTNA and UTRN and with the sodium channel proteins SCN4A and SCN5A. Interacts with DTNB. In terms of processing, phosphorylated by CaM-kinase II. As to expression, ubiquitous. Expressed at high levels in the liver.

Its subcellular location is the cell membrane. It localises to the sarcolemma. It is found in the cell junction. The protein localises to the cytoplasm. The protein resides in the cytoskeleton. Functionally, adapter protein that binds to and probably organizes the subcellular localization of a variety of membrane proteins. May link various receptors to the actin cytoskeleton and the dystrophin glycoprotein complex. The protein is Beta-1-syntrophin (Sntb1) of Mus musculus (Mouse).